Here is a 442-residue protein sequence, read N- to C-terminus: Chaperone protein dnaJ A6, chloroplastic (442 aa).

The transit peptide at 1–82 (MAIIQLGSTC…PRRGSRFTVR (82 aa)) directs the protein to the chloroplast. The J domain occupies 86-150 (DYYSVLGVSK…EKKSLYDRYG (65 aa)). The CR-type zinc-finger motif lies at 211–292 (GMEKEIEISR…CSGDGRVRKT (82 aa)). Zn(2+)-binding residues include Cys224, Cys227, Cys241, Cys244, Cys267, Cys270, Cys280, and Cys283. 4 CXXCXGXG motif repeats span residues 224 to 231 (CGTCEGSG), 241 to 248 (CTTCGGQG), 267 to 274 (CSSCNGTG), and 280 to 287 (CGTCSGDG).

It belongs to the DnaJ family.

Its subcellular location is the plastid. It is found in the chloroplast. May function together with HSC70 chaperone to assist protein folding and prevent protein aggregation during heat stress in the chloroplast. This is Chaperone protein dnaJ A6, chloroplastic from Arabidopsis thaliana (Mouse-ear cress).